A 346-amino-acid polypeptide reads, in one-letter code: Probable WRKY transcription factor 54 (346 aa).

Positions 109-130 are disordered; that stretch reads PVSCNGGDSGESKKKRLGVGKG. Residues 121-130 are compositionally biased toward basic residues; that stretch reads KKKRLGVGKG. The segment at residues 146 to 214 is a DNA-binding region (WRKY); that stretch reads VEAKSSEDRY…YIGYHTCTAN (69 aa). Basic and acidic residues predominate over residues 267 to 282; that stretch reads VKEEQNNNGDQSKDYY. The tract at residues 267 to 286 is disordered; that stretch reads VKEEQNNNGDQSKDYYEGSS.

It belongs to the WRKY group III family. Interacts with WRKY30. Binds to BZR2/BES1 to cooperatively regulate the expression of target genes. Interacts with ASK7/BIN2. Post-translationally, phosphorylated and destabilized by ASK7/BIN2. Expressed in leaves.

It is found in the nucleus. In terms of biological role, transcription factor. Interacts specifically with the W box (5'-(T)TGAC[CT]-3'), a frequently occurring elicitor-responsive cis-acting element. Together with WRKY70, negative regulator of developmental senescence, probably via the regulation of several senescence-associated markers genes. Positive regulator of EDS1-dependent defense against E.amylovora. In collaboration with WRKY70, prevents stomatal closure and, consequently, osmotic stress tolerance. Together with WRKY46 and WRKY70, promotes brassinosteroid (BR)-regulated plant growth but prevent drought response by modulating gene expression. Negative regulator of SA biosynthesis. Prevents defense response to the necrotrophic pathogens P.carotovorum and B.cinerea, but promotes defense against biotrophic/hemibiotrophic pathogens P.syringae pv. tomato (Pst) DC3000, probably by regulating negatively the jasmonic acid (JA)/ethylene (ET) and positively the salicylic acid (SA) signaling pathways. The protein is Probable WRKY transcription factor 54 of Arabidopsis thaliana (Mouse-ear cress).